A 205-amino-acid polypeptide reads, in one-letter code: Basonuclin zinc finger protein homolog (205 aa).

2 C2H2-type zinc fingers span residues 107–130 (VACD…SAVH) and 135–164 (HTCT…PKLH). Residues 145-168 (QFSSRRSRNRHSSNNNPKLHMPES) are disordered.

In terms of tissue distribution, expressed in the VA and VB motor neurons and at lower levels in the SABV neuron pair.

The protein localises to the nucleus. Functionally, probable transcription factor. Involved in motor neuron fate determination and maintenance, acting as a transcriptional repressor to counteract gene activation by transcription factor unc-3 in a subset of motor neurons. Required throughout development to repress transcription by unc-3, probably acting by binding to specific promoter elements. Represses expression of DA and DB motor neuron-specific effector genes, such as unc-129 and unc-53, in VA and VB motor neurons. The polypeptide is Basonuclin zinc finger protein homolog (Caenorhabditis elegans).